We begin with the raw amino-acid sequence, 377 residues long: Glycine oxidase (377 aa).

FAD contacts are provided by residues 14 to 15 (VI), 34 to 35 (EK), 42 to 43 (AS), 47 to 49 (AGM), and V180. Residues R309 and R336 each coordinate substrate. 334 to 340 (HYRNGIL) is a binding site for FAD.

It belongs to the DAO family. ThiO subfamily. As to quaternary structure, homotetramer. FAD serves as cofactor.

It catalyses the reaction glycine + O2 + H2O = glyoxylate + H2O2 + NH4(+). The enzyme catalyses N-ethylglycine + O2 + H2O = ethylamine + glyoxylate + H2O2. It carries out the reaction sarcosine + O2 + H2O = methylamine + glyoxylate + H2O2. The catalysed reaction is D-alanine + O2 + H2O = pyruvate + H2O2 + NH4(+). It functions in the pathway cofactor biosynthesis; thiamine diphosphate biosynthesis. With respect to regulation, is inhibited at high substrate concentration. Catalyzes the FAD-dependent oxidative deamination of various amines and D-amino acids to yield the corresponding alpha-keto acids, ammonia/amine, and hydrogen peroxide. Oxidizes glycine, sarcosine (N-methylglycine), N-ethylglycine, D-proline, D-alanine, glycine-ethyl ester, and some other D-amino acids. Does not act on L-proline. Is essential for thiamine biosynthesis since the oxidation of glycine catalyzed by ThiO generates the glycine imine intermediate (dehydroglycine) required for the biosynthesis of the thiazole ring of thiamine pyrophosphate. This is Glycine oxidase from Geobacillus kaustophilus (strain HTA426).